The chain runs to 597 residues: MATLSMQVSILNKQLKNLNSFGMRASKLPLVARRVDVSTTRLRPICSASQQVEEETRRSGNYQASIWDNAFIQSFNTNKYRDEKHLNRKEELIAQVKVLLNTKMEAVKQLELIDDLRNLGLTYYFQDEFKKILTCIYNDHKCFKNEQVGDLYFTSLGFRLLRLHGFDVSEEVFSFFKNEDGSDFKASLGENTKDVLQLYEASFLVRVGEVTLEQARVFSTKILEKKVDEGINDEKLLAWIQHSLALPLHWRIQRLEARWFLDAYAARKDMNPLIFELGKIDFHIIQETQLEEVQEVSRWWTNSNLAEKLPFVRDRIVECYFWALGLFEPHEYGYQRKMAAIIITFVTIIDDVYDVYGTLDELQLFTDAIRKWDFESISTLPYYMQVCYLALYTYASELAYDILKDQGFNSISYLQRSWLSLVEGFFQEAKWYYAGYTPTLAEYLENAKVSISSPTIISQVYFTLPNSTERTVVENVYGYHNILYLSGMILRLADDLGTTQFELKRGDVQKAIQCYMKDNNATEKEGQEHVKYLLLEAWKEMNTAMADPDCPLSEDLVDAAANLGRASQFIYLEGDGHGVQHSEIHNQMGGLIFEPYV.

The transit peptide at 1-47 directs the protein to the chloroplast; it reads MATLSMQVSILNKQLKNLNSFGMRASKLPLVARRVDVSTTRLRPICS. Asp-350 and Asp-354 together coordinate Mn(2+). The DDXXD motif signature appears at 350 to 354; sequence DDVYD. Homodimerization stretches follow at residues 356 to 362 and 428 to 464; these read YGTLDEL and EAKW…YFTL. 2 residues coordinate Mn(2+): Asp-494 and Glu-502.

The protein belongs to the terpene synthase family. As to quaternary structure, homodimer. Mn(2+) is required as a cofactor. Requires Mg(2+) as cofactor.

The protein localises to the plastid. Its subcellular location is the chloroplast. It carries out the reaction (2E)-geranyl diphosphate = gamma-terpinene + diphosphate. The protein operates within secondary metabolite biosynthesis; terpenoid biosynthesis. Its function is as follows. Involved in the biosynthesis of phenolic monoterpenes natural products thymol and carvacrol which have a broad range of biological activities acting as antimicrobial compounds, insecticides, antioxidants and pharmaceutical agents. Monoterpene synthase which catalyzes the conversion of geranyl diphosphate (GPP) to gamma-terpinene and minor amounts of other monoterpenes (e.g. alpha-thujene, alpha-terpinene, myrcene, sabinene, (+)-R-limonene, alpha-pinene and alpha-phellandrene). The protein is Gamma-terpinene synthase, chloroplastic of Thymus caespititius (Cretan thyme).